Reading from the N-terminus, the 144-residue chain is Large ribosomal subunit protein uL15 (144 aa).

A disordered region spans residues 1-57 (MELNNIKPADGAKKDKRRVGRGIGSGLGKTAGRGHKGQKSRAGGFHKVGFEGGQMPM). Gly residues predominate over residues 21-31 (RGIGSGLGKTA).

This sequence belongs to the universal ribosomal protein uL15 family. In terms of assembly, part of the 50S ribosomal subunit.

Functionally, binds to the 23S rRNA. This chain is Large ribosomal subunit protein uL15, found in Thiobacillus denitrificans (strain ATCC 25259 / T1).